The sequence spans 188 residues: MADEQPQGNGQGAAQQGEQPKQQFQIAKLYLKDVSLETPNSPEVFTGEWKPQVNVDLTSKTRALQEGHYEVALTVTVTAKQGEKTAYLCEVTQAGVFQIKGFEDAARNGLLGAYCPAQLFPYVRETVNSLITQGGFPAMVLQPVNFDALYQQRLAQAAERQKAEQAQGGGAEAKGSDSTAAQGSDTQQ.

2 disordered regions span residues 1–21 (MADEQPQGNGQGAAQQGEQPK) and 160–188 (RQKAEQAQGGGAEAKGSDSTAAQGSDTQQ). A compositionally biased stretch (polar residues) spans 176 to 188 (SDSTAAQGSDTQQ).

This sequence belongs to the SecB family. Homotetramer, a dimer of dimers. One homotetramer interacts with 1 SecA dimer.

It is found in the cytoplasm. Functionally, one of the proteins required for the normal export of preproteins out of the cell cytoplasm. It is a molecular chaperone that binds to a subset of precursor proteins, maintaining them in a translocation-competent state. It also specifically binds to its receptor SecA. In Alkalilimnicola ehrlichii (strain ATCC BAA-1101 / DSM 17681 / MLHE-1), this protein is Protein-export protein SecB.